We begin with the raw amino-acid sequence, 49 residues long: Small ribosomal subunit protein eS31 (49 aa).

Zn(2+)-binding residues include cysteine 21, cysteine 24, cysteine 39, and cysteine 42. The C4-type zinc finger occupies 21 to 42; the sequence is CPRCGNGVFLAEHEDRMSCGRC.

The protein belongs to the eukaryotic ribosomal protein eS31 family. Part of the 30S ribosomal subunit. It depends on Zn(2+) as a cofactor.

The sequence is that of Small ribosomal subunit protein eS31 from Methanothrix thermoacetophila (strain DSM 6194 / JCM 14653 / NBRC 101360 / PT) (Methanosaeta thermophila).